A 446-amino-acid polypeptide reads, in one-letter code: tRNA-2-methylthio-N(6)-dimethylallyladenosine synthase (446 aa).

In terms of domain architecture, MTTase N-terminal spans 8–124; that stretch reads KTYRVKSFGC…LPGMIDAAVA (117 aa). The [4Fe-4S] cluster site is built by cysteine 17, cysteine 53, cysteine 87, cysteine 160, cysteine 164, and cysteine 167. The 233-residue stretch at 146–378 folds into the Radical SAM core domain; it reads RKSAPSAFLT…QAALNRDQAA (233 aa). One can recognise a TRAM domain in the interval 381 to 442; the sequence is AGSVGRTCEV…PNSLAGQLLE (62 aa).

The protein belongs to the methylthiotransferase family. MiaB subfamily. Monomer. [4Fe-4S] cluster serves as cofactor.

Its subcellular location is the cytoplasm. It catalyses the reaction N(6)-dimethylallyladenosine(37) in tRNA + (sulfur carrier)-SH + AH2 + 2 S-adenosyl-L-methionine = 2-methylsulfanyl-N(6)-dimethylallyladenosine(37) in tRNA + (sulfur carrier)-H + 5'-deoxyadenosine + L-methionine + A + S-adenosyl-L-homocysteine + 2 H(+). Catalyzes the methylthiolation of N6-(dimethylallyl)adenosine (i(6)A), leading to the formation of 2-methylthio-N6-(dimethylallyl)adenosine (ms(2)i(6)A) at position 37 in tRNAs that read codons beginning with uridine. In Erythrobacter litoralis (strain HTCC2594), this protein is tRNA-2-methylthio-N(6)-dimethylallyladenosine synthase.